The chain runs to 307 residues: Aspartate carbamoyltransferase catalytic subunit (307 aa).

Residues Arg-55 and Thr-56 each coordinate carbamoyl phosphate. Residue Lys-85 coordinates L-aspartate. Carbamoyl phosphate-binding residues include Arg-106, His-134, and Gln-137. Residues Arg-167 and Arg-228 each coordinate L-aspartate. Positions 266 and 267 each coordinate carbamoyl phosphate.

This sequence belongs to the aspartate/ornithine carbamoyltransferase superfamily. ATCase family. In terms of assembly, heterododecamer (2C3:3R2) of six catalytic PyrB chains organized as two trimers (C3), and six regulatory PyrI chains organized as three dimers (R2).

The enzyme catalyses carbamoyl phosphate + L-aspartate = N-carbamoyl-L-aspartate + phosphate + H(+). It functions in the pathway pyrimidine metabolism; UMP biosynthesis via de novo pathway; (S)-dihydroorotate from bicarbonate: step 2/3. In terms of biological role, catalyzes the condensation of carbamoyl phosphate and aspartate to form carbamoyl aspartate and inorganic phosphate, the committed step in the de novo pyrimidine nucleotide biosynthesis pathway. The polypeptide is Aspartate carbamoyltransferase catalytic subunit (Tolumonas auensis (strain DSM 9187 / NBRC 110442 / TA 4)).